A 128-amino-acid chain; its full sequence is MIKKSEMTKKAIAHGKYIRGSASKVRRVLDQIRGKSYRDALIMLEFMPYRSTDPITKVLRSAVANAEHNLGMEPSSLVISSASADNGPVMKRFRPRAQGRAFSIKKQTCHISISVESAPNQTNTEAQN.

The protein belongs to the universal ribosomal protein uL22 family. Part of the 50S ribosomal subunit.

Functionally, this protein binds specifically to 23S rRNA; its binding is stimulated by other ribosomal proteins, e.g. L4, L17, and L20. It is important during the early stages of 50S assembly. It makes multiple contacts with different domains of the 23S rRNA in the assembled 50S subunit and ribosome. The globular domain of the protein is located near the polypeptide exit tunnel on the outside of the subunit, while an extended beta-hairpin is found that lines the wall of the exit tunnel in the center of the 70S ribosome. This chain is Large ribosomal subunit protein uL22, found in Prochlorococcus marinus (strain MIT 9515).